The following is a 369-amino-acid chain: GDSL esterase/lipase At5g42170 (369 aa).

Residues 1 to 16 (MSRLVYVIFLLVVVEG) form the signal peptide. N-linked (GlcNAc...) asparagine glycosylation is found at N28 and N45. The active-site Nucleophile is the S57. 2 N-linked (GlcNAc...) asparagine glycosylation sites follow: N203 and N336. Residues D344 and H347 contribute to the active site.

It belongs to the 'GDSL' lipolytic enzyme family.

Its subcellular location is the secreted. This chain is GDSL esterase/lipase At5g42170, found in Arabidopsis thaliana (Mouse-ear cress).